We begin with the raw amino-acid sequence, 360 residues long: Spermidine/putrescine-binding periplasmic protein 1 (360 aa).

The N-terminal stretch at 1–16 (MKKFAGLITASFVAAT) is a signal peptide.

It belongs to the bacterial solute-binding protein PotD/PotF family.

It is found in the periplasm. Required for the activity of the bacterial periplasmic transport system of putrescine and spermidine. Polyamine binding protein. This is Spermidine/putrescine-binding periplasmic protein 1 (potD-B) from Haemophilus influenzae (strain ATCC 51907 / DSM 11121 / KW20 / Rd).